The following is a 166-amino-acid chain: Myosin regulatory light chain 2, ventricular/cardiac muscle isoform (166 aa).

Residue Ser-2 is modified to N,N,N-trimethylserine. Phosphoserine is present on residues Ser-14, Ser-15, and Ser-19. EF-hand domains lie at 24 to 59 (TQIQEFKEAFTIMDQNRDGFIDKNDLRDTFAALGRV), 94 to 129 (DPEETILNAFKVFDPEGKGSLKADYVREMLTTQAER), and 130 to 165 (FSKEEIDQMFAAFPPDVTGNLDYKNLVHIITHGEEK). Ca(2+)-binding residues include Asp-37, Asn-39, Asp-41, and Asp-48. Thr-52 carries the phosphothreonine modification.

Myosin is a hexamer of 2 heavy chains and 4 light chains. Interacts with MYOC. In terms of processing, N-terminus is methylated by METTL11A/NTM1. Post-translationally, phosphorylated by MYLK3 and MYLK2; promotes cardiac muscle contraction and function. Dephosphorylated by PPP1CB complexed to PPP1R12B. The phosphorylated form in adult is expressed as gradients across the heart from endocardium (low phosphorylation) to epicardium (high phosphorylation); regulates cardiac torsion and workload distribution. Abundantly expressed in both cardiac and slow skeletal muscle (soleus), with no detectable expression in fast skeletal muscle (vastus lateralis) or non-muscle tissue.

The protein localises to the cytoplasm. It localises to the myofibril. The protein resides in the sarcomere. It is found in the a band. In terms of biological role, contractile protein that plays a role in heart development and function. Following phosphorylation, plays a role in cross-bridge cycling kinetics and cardiac muscle contraction by increasing myosin lever arm stiffness and promoting myosin head diffusion; as a consequence of the increase in maximum contraction force and calcium sensitivity of contraction force. These events altogether slow down myosin kinetics and prolong duty cycle resulting in accumulated myosins being cooperatively recruited to actin binding sites to sustain thin filament activation as a means to fine-tune myofilament calcium sensitivity to force. During cardiogenesis plays an early role in cardiac contractility by promoting cardiac myofibril assembly. The polypeptide is Myosin regulatory light chain 2, ventricular/cardiac muscle isoform (Rattus norvegicus (Rat)).